The chain runs to 488 residues: Katanin p60 ATPase-containing subunit A-like 1 (488 aa).

Met1 is subject to N-acetylmethionine. The disordered stretch occupies residues 95 to 179 (DPAVWPPPVP…GASDSEIPKF (85 aa)). Residues 116–127 (PNREVRPLRKDV) are compositionally biased toward basic and acidic residues. Low complexity predominate over residues 128–138 (GAGARGLVGRA). A compositionally biased stretch (basic and acidic residues) spans 142 to 167 (SKSDKPASRDKDYRARGRDDKARKNV). Residue Ser172 is modified to Phosphoserine. 246-253 (GPPGTGKT) contacts ATP.

This sequence belongs to the AAA ATPase family. Katanin p60 subunit A1 subfamily. A-like 1 sub-subfamily. In terms of assembly, interacts with KATNB1 and KATNBL1. Widely expressed, including in testis, brain, heart, lung, kidney, liver, spleen, seminal vesicles and ovary. In testis, restricted to Sertoli cells within the seminiferous epithelium (at protein level).

Its subcellular location is the cytoplasm. The protein resides in the cytoskeleton. The protein localises to the spindle pole. It localises to the spindle. The enzyme catalyses n ATP + n H2O + a microtubule = n ADP + n phosphate + (n+1) alpha/beta tubulin heterodimers.. In terms of biological role, regulates microtubule dynamics in Sertoli cells, a process that is essential for spermiogenesis and male fertility. Severs microtubules in an ATP-dependent manner, promoting rapid reorganization of cellular microtubule arrays. Has microtubule-severing activity in vitro. The protein is Katanin p60 ATPase-containing subunit A-like 1 (Katnal1) of Mus musculus (Mouse).